A 121-amino-acid polypeptide reads, in one-letter code: Large ribosomal subunit protein bL19 (121 aa).

The protein belongs to the bacterial ribosomal protein bL19 family.

This protein is located at the 30S-50S ribosomal subunit interface and may play a role in the structure and function of the aminoacyl-tRNA binding site. This Neisseria gonorrhoeae (strain ATCC 700825 / FA 1090) protein is Large ribosomal subunit protein bL19.